The chain runs to 2181 residues: Non-reducing polyketide synthase dpmaA (2181 aa).

The N-terminal acylcarrier protein transacylase domain (SAT) stretch occupies residues 74 to 180 (QWVKGNSTQP…LALCCGAYID (107 aa)). A Ketosynthase family 3 (KS3) domain is found at 347 to 779 (QAQLLVLGPV…GTNAAMLVCQ (433 aa)). Catalysis depends on for beta-ketoacyl synthase activity residues cysteine 525, histidine 661, and histidine 702. The interval 891-1193 (VLAGQTGRRV…SFYPAALGEP (303 aa)) is malonyl-CoA:ACP transacylase (MAT) domain. Serine 977 functions as the For acyl/malonyl transferase activity in the catalytic mechanism. An N-terminal hotdog fold region spans residues 1269–1401 (VSLIGKTQNA…GVITLQEVYS (133 aa)). Residues 1269–1579 (VSLIGKTQNA…FQKIAISSLK (311 aa)) enclose the PKS/mFAS DH domain. A product template (PT) domain region spans residues 1276-1573 (QNAGVQTVEY…TILGAKFQKI (298 aa)). The interval 1425–1579 (SASVVQGDFI…FQKIAISSLK (155 aa)) is C-terminal hotdog fold. Polar residues predominate over residues 1587–1603 (GVPQTSGGRTPSSSITE). 2 disordered regions span residues 1587-1618 (GVPQ…PIPG) and 1652-1675 (ISGS…AMET). Low complexity predominate over residues 1653 to 1670 (SGSSRSTSSSPPSLESRS). The Carrier domain occupies 1677–1753 (EITEGAGSAL…TLFHTIFPQQ (77 aa)). Residue serine 1713 is modified to O-(pantetheine 4'-phosphoryl)serine. Positions 1982 to 2164 (EFMNCLFSYN…QSGFDHIDWT (183 aa)) are methyltransferase (CMeT) domain.

It functions in the pathway secondary metabolite biosynthesis; terpenoid biosynthesis. Non-reducing polyketide synthase; part of the gene cluster that mediates the biosynthesis of the diterpenoid pyrones subglutinols A and B. The first step of the pathway is the synthesis of the alpha-pyrone moiety by the polyketide synthase dpmaA via condensation of one acetyl-CoA starter unit with 3 malonyl-CoA units and 2 methylations. The alpha-pyrone is then combined with geranylgeranyl pyrophosphate (GGPP) formed by the GGPP synthase dpmaD through the action of the prenyltransferase dpmaC to yield a linear alpha-pyrone diterpenoid. Subsequent steps in the diterpenoid pyrone biosynthetic pathway involve the decalin core formation, which is initiated by the epoxidation of the C10-C11 olefin by the FAD-dependent oxidoreductase dpmaE, and is followed by a cyclization cascade catalyzed by the terpene cyclase dpmaB. The dehydrogenase dpmaF is then involved in tetrahydrofuran (THF) ring formation at the C5 unit to complete the formation of subglutinols A and B. The chain is Non-reducing polyketide synthase dpmaA from Metarhizium anisopliae (Entomophthora anisopliae).